The following is a 230-amino-acid chain: Heptaprenylglyceryl phosphate synthase (230 aa).

Lysine 12 is a binding site for sn-glycerol 1-phosphate. Mg(2+) is bound by residues aspartate 14 and threonine 40. Residues 159–164 (YVEYSG), glycine 189, and 209–210 (GD) each bind sn-glycerol 1-phosphate.

It belongs to the GGGP/HepGP synthase family. Group I subfamily. As to quaternary structure, homodimer. Requires Mg(2+) as cofactor.

It carries out the reaction sn-glycerol 1-phosphate + all-trans-heptaprenyl diphosphate = 3-heptaprenyl-sn-glycero-1-phosphate + diphosphate. It participates in membrane lipid metabolism; glycerophospholipid metabolism. Its function is as follows. Prenyltransferase that catalyzes in vivo the transfer of the heptaprenyl moiety of heptaprenyl pyrophosphate (HepPP; 35 carbon atoms) to the C3 hydroxyl of sn-glycerol-1-phosphate (G1P), producing heptaprenylglyceryl phosphate (HepGP). This reaction is an ether-bond-formation step in the biosynthesis of archaea-type G1P-based membrane lipids found in Bacillales. In Staphylococcus epidermidis (strain ATCC 35984 / DSM 28319 / BCRC 17069 / CCUG 31568 / BM 3577 / RP62A), this protein is Heptaprenylglyceryl phosphate synthase.